A 74-amino-acid chain; its full sequence is Anaphase-promoting complex subunit 13 (74 aa).

The protein belongs to the APC13 family. As to quaternary structure, the APC/C is composed of at least 12 subunits.

It localises to the nucleus. It functions in the pathway protein modification; protein ubiquitination. Its function is as follows. Component of the anaphase promoting complex/cyclosome (APC/C), a cell cycle-regulated E3 ubiquitin ligase that controls progression through mitosis and the G1 phase of the cell cycle. The APC/C complex acts by mediating ubiquitination and subsequent degradation of target proteins: it mainly mediates the formation of 'Lys-11'-linked polyubiquitin chains and, to a lower extent, the formation of 'Lys-48'- and 'Lys-63'-linked polyubiquitin chains. The APC/C complex catalyzes assembly of branched 'Lys-11'-/'Lys-48'-linked branched ubiquitin chains on target proteins. The chain is Anaphase-promoting complex subunit 13 (anapc13) from Xenopus tropicalis (Western clawed frog).